An 84-amino-acid polypeptide reads, in one-letter code: Small ribosomal subunit protein uS15 (84 aa).

Belongs to the universal ribosomal protein uS15 family. Part of the 30S ribosomal subunit. Forms a bridge to the 50S subunit in the 70S ribosome, contacting the 23S rRNA.

In terms of biological role, one of the primary rRNA binding proteins, it binds directly to 16S rRNA where it helps nucleate assembly of the platform of the 30S subunit by binding and bridging several RNA helices of the 16S rRNA. Functionally, forms an intersubunit bridge (bridge B4) with the 23S rRNA of the 50S subunit in the ribosome. The polypeptide is Small ribosomal subunit protein uS15 (Thermosipho africanus (strain TCF52B)).